Reading from the N-terminus, the 392-residue chain is Zinc finger protein ham-2 (392 aa).

2 C2H2-type zinc fingers span residues 16–39 (FPCS…MQAH) and 43–66 (YTCT…YRVH). The segment at 72 to 95 (FMCRCCNWAFPDKTSLHIHMQSML) adopts a C2H2-type 3; degenerate zinc-finger fold. 2 disordered regions span residues 106–130 (LAKS…PFSP) and 278–303 (HISH…HSGE). Over residues 112-123 (VVDSTSESGSPR) the composition is skewed to polar residues. Positions 289 to 303 (SDSHISGGSSSHSGE) are enriched in low complexity.

It localises to the nucleus. Functionally, probable transcription factor that acts downstream of egl-15, to promote migration of the HSN motor neurons from the tail to the gonad primordium during HSN cell differentiation. This Caenorhabditis elegans protein is Zinc finger protein ham-2.